The chain runs to 303 residues: Ribosomal protein L11 methyltransferase (303 aa).

Residues Thr144, Gly165, Asp187, and Asn235 each contribute to the S-adenosyl-L-methionine site.

Belongs to the methyltransferase superfamily. PrmA family.

The protein localises to the cytoplasm. It carries out the reaction L-lysyl-[protein] + 3 S-adenosyl-L-methionine = N(6),N(6),N(6)-trimethyl-L-lysyl-[protein] + 3 S-adenosyl-L-homocysteine + 3 H(+). Functionally, methylates ribosomal protein L11. This is Ribosomal protein L11 methyltransferase from Prochlorococcus marinus (strain AS9601).